A 535-amino-acid chain; its full sequence is CTP synthase (535 aa).

The amidoligase domain stretch occupies residues 1–267 (MTKFIFVTGG…DDIVIQRLQL (267 aa)). Residue Ser13 participates in CTP binding. Ser13 lines the UTP pocket. 14–19 (SLGKGI) contributes to the ATP binding site. Residue Tyr54 participates in L-glutamine binding. Position 71 (Asp71) interacts with ATP. Mg(2+)-binding residues include Asp71 and Glu141. CTP contacts are provided by residues 148–150 (DIE), 188–193 (KTKPTQ), and Lys224. Residues 188–193 (KTKPTQ) and Lys224 each bind UTP. 240–242 (RDA) contributes to the ATP binding site. Residues 293–535 (TIGLVGKYVS…VEAALNYQQK (243 aa)) enclose the Glutamine amidotransferase type-1 domain. Gly355 is an L-glutamine binding site. The active-site Nucleophile; for glutamine hydrolysis is the Cys382. Residues 383 to 386 (LGMQ), Glu406, and Arg463 contribute to the L-glutamine site. Residues His508 and Glu510 contribute to the active site.

This sequence belongs to the CTP synthase family. Homotetramer.

It catalyses the reaction UTP + L-glutamine + ATP + H2O = CTP + L-glutamate + ADP + phosphate + 2 H(+). It carries out the reaction L-glutamine + H2O = L-glutamate + NH4(+). The enzyme catalyses UTP + NH4(+) + ATP = CTP + ADP + phosphate + 2 H(+). It participates in pyrimidine metabolism; CTP biosynthesis via de novo pathway; CTP from UDP: step 2/2. Allosterically activated by GTP, when glutamine is the substrate; GTP has no effect on the reaction when ammonia is the substrate. The allosteric effector GTP functions by stabilizing the protein conformation that binds the tetrahedral intermediate(s) formed during glutamine hydrolysis. Inhibited by the product CTP, via allosteric rather than competitive inhibition. In terms of biological role, catalyzes the ATP-dependent amination of UTP to CTP with either L-glutamine or ammonia as the source of nitrogen. Regulates intracellular CTP levels through interactions with the four ribonucleotide triphosphates. The chain is CTP synthase from Staphylococcus epidermidis (strain ATCC 35984 / DSM 28319 / BCRC 17069 / CCUG 31568 / BM 3577 / RP62A).